Consider the following 872-residue polypeptide: DNA mismatch repair protein MutS (872 aa).

A compositionally biased stretch (polar residues) spans 1–17 (MSISKIESVNAEKQSPV). The disordered stretch occupies residues 1–22 (MSISKIESVNAEKQSPVGTEIG). An ATP-binding site is contributed by 632–639 (GPNMGGKS).

The protein belongs to the DNA mismatch repair MutS family.

Functionally, this protein is involved in the repair of mismatches in DNA. It is possible that it carries out the mismatch recognition step. This protein has a weak ATPase activity. This Azoarcus sp. (strain BH72) protein is DNA mismatch repair protein MutS.